The sequence spans 143 residues: ATP synthase subunit b' (143 aa).

The helical transmembrane segment at 6-26 (ATLPLMALQFVVLAFLLNAIF) threads the bilayer.

It belongs to the ATPase B chain family. As to quaternary structure, F-type ATPases have 2 components, F(1) - the catalytic core - and F(0) - the membrane proton channel. F(1) has five subunits: alpha(3), beta(3), gamma(1), delta(1), epsilon(1). F(0) has four main subunits: a(1), b(1), b'(1) and c(10-14). The alpha and beta chains form an alternating ring which encloses part of the gamma chain. F(1) is attached to F(0) by a central stalk formed by the gamma and epsilon chains, while a peripheral stalk is formed by the delta, b and b' chains.

It localises to the cellular thylakoid membrane. F(1)F(0) ATP synthase produces ATP from ADP in the presence of a proton or sodium gradient. F-type ATPases consist of two structural domains, F(1) containing the extramembraneous catalytic core and F(0) containing the membrane proton channel, linked together by a central stalk and a peripheral stalk. During catalysis, ATP synthesis in the catalytic domain of F(1) is coupled via a rotary mechanism of the central stalk subunits to proton translocation. Its function is as follows. Component of the F(0) channel, it forms part of the peripheral stalk, linking F(1) to F(0). The b'-subunit is a diverged and duplicated form of b found in plants and photosynthetic bacteria. This is ATP synthase subunit b' from Synechocystis sp. (strain ATCC 27184 / PCC 6803 / Kazusa).